A 157-amino-acid chain; its full sequence is Small ribosomal subunit protein uS7 (157 aa).

The protein belongs to the universal ribosomal protein uS7 family. As to quaternary structure, part of the 30S ribosomal subunit. Contacts proteins S9 and S11.

In terms of biological role, one of the primary rRNA binding proteins, it binds directly to 16S rRNA where it nucleates assembly of the head domain of the 30S subunit. Is located at the subunit interface close to the decoding center, probably blocks exit of the E-site tRNA. The protein is Small ribosomal subunit protein uS7 of Psychrobacter sp. (strain PRwf-1).